Consider the following 5541-residue polypeptide: Malpibaldin synthetase (5541 aa).

Over residues 1 to 13 the composition is skewed to basic and acidic residues; the sequence is MGDKRPDGIKSAE. Positions 1–26 are disordered; the sequence is MGDKRPDGIKSAESHGQPSAPFGAEN. Positions 137–378 are condensation 1; that stretch reads KEDDIARDES…IDIISPAEKT (242 aa). Positions 401–799 are adenylation 1; the sequence is FEEQVDKSPD…GRNDDQVKIR (399 aa). Positions 901-975 constitute a Carrier 1 domain; the sequence is VPCGETEDAI…VLAQDLSKHQ (75 aa). At S936 the chain carries O-(pantetheine 4'-phosphoryl)serine. Positions 1021-1469 are dual epimerase/condensation (E/C) domain 1; it reads QDVYSLAPLQ…LPLDERTKLL (449 aa). The segment at 1489–1899 is adenylation 2; it reads FEQQVKQSPI…GRNDDQIKIR (411 aa). A Carrier 2 domain is found at 2001-2075; it reads SPQGRIECAL…SFAQAFKGQL (75 aa). The residue at position 2036 (S2036) is an O-(pantetheine 4'-phosphoryl)serine. Residues 2095-2537 form a condensation 2 region; that stretch reads ELSFSQQRLW…LGSTEEELLL (443 aa). The adenylation 3 stretch occupies residues 2557-2956; sequence FEDQVERSPD…GRNDDQVKIR (400 aa). Positions 3058–3132 constitute a Carrier 3 domain; that stretch reads EPQGEVEMKL…VLAASITRGC (75 aa). At S3093 the chain carries O-(pantetheine 4'-phosphoryl)serine. Residues 3182–3616 are dual epimerase/condensation (E/C) domain 2; that stretch reads QDIYSLSPLQ…VIPAEEHDLL (435 aa). The tract at residues 3637-4038 is adenylation 4; sequence FENQVRERPE…GRNDEQVKIR (402 aa). In terms of domain architecture, Carrier 4 spans 4140 to 4214; that stretch reads APRGDIEISL…VLAASLNTHQ (75 aa). At S4175 the chain carries O-(pantetheine 4'-phosphoryl)serine. The tract at residues 4260–4695 is dual epimerase/condensation (E/C) domain 3; the sequence is VQDVYSLSPL…VIPAEEHDLL (436 aa). An adenylation 5 region spans residues 4716–5117; sequence FENQVRERPE…GRNDEQVKIR (402 aa). In terms of domain architecture, Carrier 5 spans 5219-5294; the sequence is LPSGDVEIGL…ELAQKLVQGG (76 aa). S5254 is modified (O-(pantetheine 4'-phosphoryl)serine). The interval 5315–5523 is thioesterase (TE) domain; it reads PLFCIHSGLG…VECTHIEMDK (209 aa).

It belongs to the NRP synthetase family.

In terms of biological role, nonribosomal peptide synthetase that catalyzes the biosynthesis of the hydrophobic cyclopentapeptides malpibaldins, natural products that show biosurfactant activities. Module 3 shows promiscuous adenylation (accepting either Trp, Phe or Tyr) leading to the parallel production of multiple products from one NRPS assembly line, including malpibaldin A corresponding to cyclo(-L-Leu-D-Leu-D-Phe-L-Leu-D-Val-), malpibaldin B corresponding to cyclo(-L-Leu-D-Leu-D-Tyr-L-Leu-D-Val-) and malpibaldin C corresponding to cyclo(-Leu-Leu-Trp-Leu-Val-). The protein is Malpibaldin synthetase of Mortierella alpina (Oleaginous fungus).